The sequence spans 279 residues: MLKVGLPLGACARSWKSVRMASCGMARRNPLDNKVALVTASTDGIGFAIARRLAQDGAHVVVSSRKQQNVDRAVATLKGEGLSVTGTVCHVGKAEDRERLVATAVKLHGGVDILISNAAVSPFFGSLMDVPEEVWDKILDVNVKATALLTKAVVPEMAKRGGGSIVIVSSIAAYSPFPSLGPYNVSKTALLGLTKNLALELAESNVRVNCLAPGLIRTSFSRVLWEDPARQESIKATFQIKRIGKPEECAGIVSFLCSEDASYITGETVVVAGGSLSHL.

37 to 61 (LVTASTDGIGFAIARRLAQDGAHVV) contacts NADP(+). Position 93 is an N6-acetyllysine; alternate (K93). K93 bears the N6-succinyllysine; alternate mark. The residue at position 106 (K106) is an N6-acetyllysine. S170 is a binding site for substrate. Catalysis depends on Y183, which acts as the Proton acceptor. K187 contacts NADP(+). Position 221 is a phosphoserine (S221). An N6-succinyllysine modification is found at K235. A Peroxisomal targeting signal motif is present at residues 277 to 279 (SHL).

The protein belongs to the short-chain dehydrogenases/reductases (SDR) family. Homotetramer.

The protein resides in the peroxisome. It catalyses the reaction a secondary alcohol + NADP(+) = a ketone + NADPH + H(+). The enzyme catalyses 3alpha-hydroxy-5beta-pregnan-20-one + NADP(+) = 5beta-pregnan-3,20-dione + NADPH + H(+). The catalysed reaction is 5beta-dihydrotestosterone + NADPH + H(+) = 5beta-androstane-3alpha,17beta-diol + NADP(+). It carries out the reaction all-trans-retinol + NADP(+) = all-trans-retinal + NADPH + H(+). It catalyses the reaction isatin + NADPH + H(+) = 3-hydroxyindolin-2-one + NADP(+). In terms of biological role, NADPH-dependent oxidoreductase which catalyzes the reduction of a variety of compounds bearing carbonyl groups including ketosteroids, alpha-dicarbonyl compounds, aldehydes, aromatic ketones and quinones. Reduces all-trans-retinal and 9-cis retinal. Reduces 3-ketosteroids and benzil into 3alpha-hydroxysteroids and S-benzoin, respectively, in contrast to the stereoselectivity of primates DHRS4s which produce 3beta-hydroxysteroids and R-benzoin. In the reverse reaction, catalyzes the NADP-dependent oxidation of 3alpha-hydroxysteroids and alcohol, but with much lower efficiency. Involved in the metabolism of 3alpha-hydroxysteroids, retinoid, isatin and xenobiotic carbonyl compounds. This is Dehydrogenase/reductase SDR family member 4 (DHRS4) from Bos taurus (Bovine).